The primary structure comprises 131 residues: uncharacterized protein (131 aa).

The N-terminal stretch at 1–26 is a signal peptide; it reads MKKIVAAIVVIGLVFIAFFYLYSRSG.

This is an uncharacterized protein from Bacillus subtilis (strain 168).